The primary structure comprises 276 residues: Undecaprenyl-diphosphatase 2 (276 aa).

Helical transmembrane passes span 1 to 21, 44 to 64, 87 to 107, 114 to 134, 150 to 170, 190 to 210, 222 to 242, and 251 to 271; these read MSLW…LFPV, QLLP…LWYF, GHLM…GLLL, VFHD…LLWL, MTFK…IPGF, AAEF…VLEL, DALL…RFLM, and LASF…WFML.

Belongs to the UppP family.

It localises to the cell inner membrane. The enzyme catalyses di-trans,octa-cis-undecaprenyl diphosphate + H2O = di-trans,octa-cis-undecaprenyl phosphate + phosphate + H(+). Catalyzes the dephosphorylation of undecaprenyl diphosphate (UPP). Confers resistance to bacitracin. The polypeptide is Undecaprenyl-diphosphatase 2 (Burkholderia lata (strain ATCC 17760 / DSM 23089 / LMG 22485 / NCIMB 9086 / R18194 / 383)).